Consider the following 276-residue polypeptide: Glyoxal reductase (276 aa).

The active-site Proton donor is the Tyr54. His112 provides a ligand contact to substrate. Position 190–242 (190–242) interacts with NADP(+); it reads SPLMQGQLLDNEVLTQIAEKHNKSVAQVILRWDLQHGVVTIPKSIKEHRIIEN.

This sequence belongs to the aldo/keto reductase family.

The enzyme catalyses (S)-lactaldehyde + NADP(+) = methylglyoxal + NADPH + H(+). Its function is as follows. Reduces glyoxal and methylglyoxal (2-oxopropanal). Is not involved in the vitamin B6 biosynthesis. The chain is Glyoxal reductase (yvgN) from Bacillus subtilis (strain 168).